The chain runs to 149 residues: Deoxyuridine 5'-triphosphate nucleotidohydrolase (149 aa).

Residues 68 to 70 (RSG), asparagine 81, 85 to 87 (LID), and methionine 95 contribute to the substrate site.

Belongs to the dUTPase family. Mg(2+) serves as cofactor.

The catalysed reaction is dUTP + H2O = dUMP + diphosphate + H(+). Its pathway is pyrimidine metabolism; dUMP biosynthesis; dUMP from dCTP (dUTP route): step 2/2. This enzyme is involved in nucleotide metabolism: it produces dUMP, the immediate precursor of thymidine nucleotides and it decreases the intracellular concentration of dUTP so that uracil cannot be incorporated into DNA. The sequence is that of Deoxyuridine 5'-triphosphate nucleotidohydrolase from Bordetella bronchiseptica (strain ATCC BAA-588 / NCTC 13252 / RB50) (Alcaligenes bronchisepticus).